The primary structure comprises 1940 residues: Myosin-2 (1940 aa).

Residues 33-82 enclose the Myosin N-terminal SH3-like domain; that stretch reads DAKTSVFVAEPKESFVKGTVQSREGGKVTVKTEAGATLTVKEDQVFPMNP. Residues threonine 64 and threonine 69 each carry the phosphothreonine modification. The 698-residue stretch at 86–783 folds into the Myosin motor domain; sequence DKIEDMAMMT…LLGLLEEMRD (698 aa). Lysine 130 carries the post-translational modification N6,N6,N6-trimethyllysine. An ATP-binding site is contributed by 179–186; it reads GESGAGKT. A Phosphotyrosine modification is found at tyrosine 389. The residue at position 392 (serine 392) is a Phosphoserine. Threonine 419 carries the phosphothreonine modification. At serine 625 the chain carries Phosphoserine. An actin-binding region spans residues 660 to 682; that stretch reads LNKLMTNLRSTHPHFVRCIIPNE. Position 758 is a pros-methylhistidine (histidine 758). An actin-binding region spans residues 762-776; the sequence is KFGHTKVFFKAGLLG. The 30-residue stretch at 786–815 folds into the IQ domain; it reads LAQLITRTQARCRGFLARVEYQKMVERRES. The stretch at 844–1940 forms a coiled coil; that stretch reads LLKSAETEKE…EVHTKVISEE (1097 aa). Residues serine 1093, serine 1097, serine 1163, and serine 1238 each carry the phosphoserine modification. The segment at 1154–1173 is disordered; sequence RLEEAGGATSAQIEMNKKRE. Threonine 1242 is subject to Phosphothreonine. Serine 1244 carries the phosphoserine modification. A Phosphothreonine modification is found at threonine 1256. Position 1262 is a phosphoserine (serine 1262). Position 1287 is a phosphothreonine (threonine 1287). 4 positions are modified to phosphoserine: serine 1289, serine 1293, serine 1304, and serine 1307. Tyrosine 1465 is subject to Phosphotyrosine. Threonine 1468 is subject to Phosphothreonine. Position 1475 is a phosphoserine (serine 1475). The residue at position 1493 (tyrosine 1493) is a Phosphotyrosine. At serine 1496 the chain carries Phosphoserine. Threonine 1502 is modified (phosphothreonine). At serine 1515 the chain carries Phosphoserine. Position 1518 is a phosphothreonine (threonine 1518). A phosphoserine mark is found at serine 1543, serine 1555, serine 1575, serine 1601, serine 1715, and serine 1727. A phosphothreonine mark is found at threonine 1731 and threonine 1737. Residue serine 1740 is modified to Phosphoserine. The disordered stretch occupies residues 1884 to 1920; the sequence is KRQAEEAEEQSNTNLSKFRKLQHELEEAEERADIAES.

It belongs to the TRAFAC class myosin-kinesin ATPase superfamily. Myosin family. Muscle myosin is a hexameric protein that consists of 2 heavy chain subunits (MHC), 2 alkali light chain subunits (MLC) and 2 regulatory light chain subunits (MLC-2). Interacts with GCSAM.

The protein resides in the cytoplasm. Its subcellular location is the myofibril. Myosins are actin-based motor molecules with ATPase activity essential for muscle contraction. The protein is Myosin-2 (MYH2) of Canis lupus familiaris (Dog).